We begin with the raw amino-acid sequence, 429 residues long: MNGLMIAAPSSGSGKTTVTLGLMRALRRRGLSIAPGKAGPDYIDPAFHTAASGKPCFNYDPWAMRPELLLANAAAAAEDGSVLIMEAMMGLFDGAADGTGAPADLAAALGLAVILVVDCARLSHSVAALVGGYARHRDDVRVAGVILNRVGSDRHEGMLRDALAGIAMPVFGVLRQDAALKLPERHLGLVQAGEHGSLEAFIDHAAMRVASGCDLEAVLAAATPLTVGERAGTLKPLGQRTAVARDVAFAFCYEHLLSGWRGQGAEVTFFSPLADEAPDPRADAVYLPGGYPELHAEQLSNASNFRAAMHKAAGGGARVFGECGGYMVLGEGLVAADGGRYEMLGLLPLVTSFAERKRHLGYRRVTPVDDVFFRGPMTAHEFHYATIVSEGAAEPLFTVRDAAGLDLGRAGLRRRNVAGSFMHLIDFSE.

The GATase cobBQ-type domain occupies 240–429; the sequence is RTAVARDVAF…SFMHLIDFSE (190 aa). The active-site Nucleophile is C323.

It belongs to the CobB/CbiA family. The cofactor is Mg(2+).

The catalysed reaction is hydrogenobyrinate + 2 L-glutamine + 2 ATP + 2 H2O = hydrogenobyrinate a,c-diamide + 2 L-glutamate + 2 ADP + 2 phosphate + 2 H(+). Its pathway is cofactor biosynthesis; adenosylcobalamin biosynthesis; cob(II)yrinate a,c-diamide from precorrin-2 (aerobic route): step 9/10. Functionally, catalyzes the ATP-dependent amidation of the two carboxylate groups at positions a and c of hydrogenobyrinate, using either L-glutamine or ammonia as the nitrogen source. This is Hydrogenobyrinate a,c-diamide synthase from Rhizobium meliloti (strain 1021) (Ensifer meliloti).